The following is a 444-amino-acid chain: ATP-dependent 6-phosphofructokinase 2 (444 aa).

Position 55 is a phosphoserine (serine 55). ATP contacts are provided by residues glycine 86, 149–150 (RG), and 174–177 (GDGT). Aspartate 175 is a Mg(2+) binding site. Substrate is bound by residues 203–205 (TVD), 248–250 (MGR), glutamate 304, and 362–365 (YMIR). The active-site Proton acceptor is aspartate 205.

The protein belongs to the phosphofructokinase type A (PFKA) family. PPi-dependent PFK group II subfamily. Atypical ATP-dependent clade 'X' sub-subfamily. In terms of assembly, homotetramer. The cofactor is Mg(2+). Mostly expressed in roots and stems.

The protein localises to the cytoplasm. The catalysed reaction is beta-D-fructose 6-phosphate + ATP = beta-D-fructose 1,6-bisphosphate + ADP + H(+). Its pathway is carbohydrate degradation; glycolysis; D-glyceraldehyde 3-phosphate and glycerone phosphate from D-glucose: step 3/4. With respect to regulation, allosterically activated by AMP. Functionally, catalyzes the phosphorylation of D-fructose 6-phosphate to fructose 1,6-bisphosphate by ATP, the first committing step of glycolysis. The protein is ATP-dependent 6-phosphofructokinase 2 of Arabidopsis thaliana (Mouse-ear cress).